The sequence spans 344 residues: Putative voltage-gated potassium channel subunit beta (344 aa).

Trp33, Asp62, Tyr67, Ser167, Gln193, Trp222, Ser223, Pro224, Leu225, Lys233, Arg243, Gly301, Ser303, Gln307, Glu310, and Asn311 together coordinate NADP(+). Tyr67 (proton donor/acceptor) is an active-site residue.

It belongs to the shaker potassium channel beta subunit family. Forms heteromultimeric complexes with potassium channel alpha subunits.

It is found in the cytoplasm. The protein resides in the nucleus. In terms of biological role, probable accessory potassium channel protein which modulates the activity of the pore-forming alpha subunit. This is Putative voltage-gated potassium channel subunit beta from Schizosaccharomyces pombe (strain 972 / ATCC 24843) (Fission yeast).